Reading from the N-terminus, the 141-residue chain is VLSGTDKTNVKSIFSKIGGQADDYGAEALERMFVTYPQTKTYFPHFDVSPGSAQVKAHGKKVAGGLSEAANHIDDIATSLSKLSDLHAQKLRVDPVNFKLLGQCFLVVVAIHNPSALTPEAHASLDKFLCAVGLVLTAKYR.

The region spanning 1–141 (VLSGTDKTNV…VGLVLTAKYR (141 aa)) is the Globin domain. Residue His-58 coordinates O2. His-87 contributes to the heme b binding site.

The protein belongs to the globin family. As to quaternary structure, heterotetramer of two alpha chains and two beta chains. Red blood cells.

Functionally, involved in oxygen transport from the lung to the various peripheral tissues. The protein is Hemoglobin subunit alpha (HBA) of Psittacula krameri (Rose-ringed parakeet).